Here is a 433-residue protein sequence, read N- to C-terminus: Cysteine--tRNA ligase (433 aa).

Cys4 contributes to the Zn(2+) binding site. Residues 6–16 (PTVYDTAHIGN) carry the 'HIGH' region motif. Positions 188, 213, and 217 each coordinate Zn(2+). Positions 246 to 250 (KMSKS) match the 'KMSKS' region motif. Position 249 (Lys249) interacts with ATP.

Belongs to the class-I aminoacyl-tRNA synthetase family. As to quaternary structure, monomer. It depends on Zn(2+) as a cofactor.

It localises to the cytoplasm. The catalysed reaction is tRNA(Cys) + L-cysteine + ATP = L-cysteinyl-tRNA(Cys) + AMP + diphosphate. This is Cysteine--tRNA ligase from Wolbachia sp. subsp. Brugia malayi (strain TRS).